Here is a 521-residue protein sequence, read N- to C-terminus: MAAVLANGDSQGRPQRNYQVVVAGTRDMGIGKDGVLPWKLPGDLKFFKELTLTTSDPVKKNAVIMGRKTWESIPVKSRPLPGRLNVILTRSGSFDFATVENVVICGSMESALELLASTPYCLSIEKVFVIGGGQVLREYLKGPACEAIHLTDIQSSIECDTFIPPVDFSVFQPWYSSFPVIESNIRHSFVSFVRVRKSVAETHESNGKESTEVDTKNDKFETENFSFLPKMVYDRHEEYQYLNLVEDIIRSGAQKNDRTGTGTLSKFGCQMRFNLRKNFPLLTTKRVFWRGVVEELLWFISGSTNAKVLQEKGIHIWDGNASREYLNSVGLAHREEGDLGPIYGFQWRHFGAEYTDMHADYTGKGFDQLMDVIDKIKNDPEDRRIILSAWNPSDLKKMALPPCHMFAQFYVENGELSCQMYQRSADMGLGVPFNIASYSLLTYMIAQVCDLSPGDFVHVIGDAHVYRNHVRALEEQIQKMPKPFPILKINPSKKDIDSFMASDFKLVGYDPHQKIEMKMAV.

One can recognise a DHFR domain in the interval 17 to 194 (NYQVVVAGTR…IRHSFVSFVR (178 aa)). Valine 21 serves as a coordination point for substrate. NADP(+) contacts are provided by residues alanine 23 and 29–35 (GIGKDGV). Aspartate 43 is a substrate binding site. NADP(+)-binding positions include 67-69 (RKT) and 88-91 (LTRS). Isoleucine 130 is a substrate binding site. 131–138 (GGGQVLRE) is a binding site for NADP(+). Residue threonine 151 participates in substrate binding. The interval 197-521 (KSVAETHESN…HQKIEMKMAV (325 aa)) is thymidylate synthase. Residue arginine 258 coordinates dUMP. Cysteine 403 is a catalytic residue. DUMP-binding positions include histidine 404, 422–426 (QRSAD), asparagine 434, and 464–466 (HVY).

In the N-terminal section; belongs to the dihydrofolate reductase family. It in the C-terminal section; belongs to the thymidylate synthase family.

The catalysed reaction is (6S)-5,6,7,8-tetrahydrofolate + NADP(+) = 7,8-dihydrofolate + NADPH + H(+). It carries out the reaction dUMP + (6R)-5,10-methylene-5,6,7,8-tetrahydrofolate = 7,8-dihydrofolate + dTMP. Its pathway is cofactor biosynthesis; tetrahydrofolate biosynthesis; 5,6,7,8-tetrahydrofolate from 7,8-dihydrofolate: step 1/1. In terms of biological role, bifunctional enzyme. Involved in de novo dTMP biosynthesis. Key enzyme in folate metabolism. Can play two different roles depending on the source of dihydrofolate: de novo synthesis of tetrahydrofolate or recycling of the dihydrofolate released as one of the end products of the TS catalyzed reaction. Catalyzes an essential reaction for de novo glycine and purine synthesis, DNA precursor synthesis, and for the conversion of dUMP to dTMP. The sequence is that of Bifunctional dihydrofolate reductase-thymidylate synthase (DRTS) from Zea mays (Maize).